A 385-amino-acid chain; its full sequence is GTPase Obg (385 aa).

The region spanning 1-159 is the Obg domain; it reads MHFIDQAEIE…RRLRLELKLI (159 aa). Positions 160 to 328 constitute an OBG-type G domain; sequence AEVGIVGMPN…LLQRVWQCLG (169 aa). GTP-binding positions include 166–173, 191–195, 213–216, 280–283, and 309–311; these read GMPNAGKS, FTTLQ, DIPG, NKID, and SAV. Mg(2+)-binding residues include serine 173 and threonine 193.

It belongs to the TRAFAC class OBG-HflX-like GTPase superfamily. OBG GTPase family. In terms of assembly, monomer. Mg(2+) is required as a cofactor.

The protein resides in the cytoplasm. Functionally, an essential GTPase which binds GTP, GDP and possibly (p)ppGpp with moderate affinity, with high nucleotide exchange rates and a fairly low GTP hydrolysis rate. Plays a role in control of the cell cycle, stress response, ribosome biogenesis and in those bacteria that undergo differentiation, in morphogenesis control. This is GTPase Obg from Synechococcus sp. (strain JA-3-3Ab) (Cyanobacteria bacterium Yellowstone A-Prime).